The chain runs to 240 residues: Pyridoxine 5'-phosphate synthase (240 aa).

Residue Asn-7 coordinates 3-amino-2-oxopropyl phosphate. 9 to 10 (DH) contacts 1-deoxy-D-xylulose 5-phosphate. Arg-18 lines the 3-amino-2-oxopropyl phosphate pocket. The Proton acceptor role is filled by His-43. Arg-45 and His-50 together coordinate 1-deoxy-D-xylulose 5-phosphate. Glu-70 serves as the catalytic Proton acceptor. 1-deoxy-D-xylulose 5-phosphate is bound at residue Thr-100. His-191 functions as the Proton donor in the catalytic mechanism. Residues Gly-192 and 213–214 (GH) each bind 3-amino-2-oxopropyl phosphate.

The protein belongs to the PNP synthase family. In terms of assembly, homooctamer; tetramer of dimers.

It localises to the cytoplasm. It carries out the reaction 3-amino-2-oxopropyl phosphate + 1-deoxy-D-xylulose 5-phosphate = pyridoxine 5'-phosphate + phosphate + 2 H2O + H(+). It functions in the pathway cofactor biosynthesis; pyridoxine 5'-phosphate biosynthesis; pyridoxine 5'-phosphate from D-erythrose 4-phosphate: step 5/5. Catalyzes the complicated ring closure reaction between the two acyclic compounds 1-deoxy-D-xylulose-5-phosphate (DXP) and 3-amino-2-oxopropyl phosphate (1-amino-acetone-3-phosphate or AAP) to form pyridoxine 5'-phosphate (PNP) and inorganic phosphate. In Trichodesmium erythraeum (strain IMS101), this protein is Pyridoxine 5'-phosphate synthase.